The chain runs to 221 residues: Thiamine-phosphate synthase (221 aa).

Residues glutamine 44–lysine 48 and asparagine 80 each bind 4-amino-2-methyl-5-(diphosphooxymethyl)pyrimidine. Mg(2+)-binding residues include aspartate 81 and aspartate 100. Position 119 (threonine 119) interacts with 4-amino-2-methyl-5-(diphosphooxymethyl)pyrimidine. Threonine 146–threonine 148 provides a ligand contact to 2-[(2R,5Z)-2-carboxy-4-methylthiazol-5(2H)-ylidene]ethyl phosphate. Residue lysine 149 participates in 4-amino-2-methyl-5-(diphosphooxymethyl)pyrimidine binding. Residue glycine 176 participates in 2-[(2R,5Z)-2-carboxy-4-methylthiazol-5(2H)-ylidene]ethyl phosphate binding.

The protein belongs to the thiamine-phosphate synthase family. Requires Mg(2+) as cofactor.

It carries out the reaction 2-[(2R,5Z)-2-carboxy-4-methylthiazol-5(2H)-ylidene]ethyl phosphate + 4-amino-2-methyl-5-(diphosphooxymethyl)pyrimidine + 2 H(+) = thiamine phosphate + CO2 + diphosphate. The catalysed reaction is 2-(2-carboxy-4-methylthiazol-5-yl)ethyl phosphate + 4-amino-2-methyl-5-(diphosphooxymethyl)pyrimidine + 2 H(+) = thiamine phosphate + CO2 + diphosphate. The enzyme catalyses 4-methyl-5-(2-phosphooxyethyl)-thiazole + 4-amino-2-methyl-5-(diphosphooxymethyl)pyrimidine + H(+) = thiamine phosphate + diphosphate. It participates in cofactor biosynthesis; thiamine diphosphate biosynthesis; thiamine phosphate from 4-amino-2-methyl-5-diphosphomethylpyrimidine and 4-methyl-5-(2-phosphoethyl)-thiazole: step 1/1. Condenses 4-methyl-5-(beta-hydroxyethyl)thiazole monophosphate (THZ-P) and 2-methyl-4-amino-5-hydroxymethyl pyrimidine pyrophosphate (HMP-PP) to form thiamine monophosphate (TMP). The polypeptide is Thiamine-phosphate synthase (Hyphomonas neptunium (strain ATCC 15444)).